The sequence spans 198 residues: Syndecan-4 (198 aa).

An N-terminal signal peptide occupies residues 1–23 (MAPACLLAPLLLLLLGGFPLVPG). The Extracellular portion of the chain corresponds to 24–145 (ESIRETEVID…QGSNIFERTE (122 aa)). Disordered stretches follow at residues 42-76 (YFSGALPDDEDAGGSDDFELSGSGDLDDTEEPRPF) and 94-130 (AQPGIRVPSEPKELEENEVIPKRAPSDVGDDMSNKVS). O-linked (Xyl...) (glycosaminoglycan) serine glycans are attached at residues Ser-44, Ser-62, and Ser-64. Over residues 48–71 (PDDEDAGGSDDFELSGSGDLDDTE) the composition is skewed to acidic residues. Positions 102–118 (SEPKELEENEVIPKRAP) are enriched in basic and acidic residues. The chain crosses the membrane as a helical span at residues 146 to 170 (VLAALIVGGVVGILFAVFLILLLVY). Over 171-198 (RMKKKDEGSYDLGKKPIYKKAPTNEFYA) the chain is Cytoplasmic.

The protein belongs to the syndecan proteoglycan family. In terms of assembly, homodimer. Interacts with CDCP1 and SDCBP. Interacts (via its cytoplasmic domain) with GIPC (via its PDZ domain). Interacts (via its cytoplasmic domain) with NUDT16L1. Interacts with DNM2; this interaction is markedly enhanced at focal ahesion site upon induction of focal adhesions and stress-fiber formation. Shedding is enhanced by a number of factors such as heparanase, thrombin or EGF. Also by stress and wound healing. PMA-mediated shedding is inhibited by TIMP3. In terms of processing, O-glycosylated; contains both chondroitin sulfate and heparan sulfate. Ser-44, Ser-62 and Ser-64 can all be modified by either chondroitin sulfate or heparan sulfate, and the protein exists in forms that contain only chondroitin sulfate, only heparan sulfate and both chondroitin sulfate and heparan sulfate. Ubiquitous. Highest levels in liver, kidney and lung.

The protein resides in the membrane. The protein localises to the secreted. Functionally, cell surface proteoglycan which regulates exosome biogenesis in concert with SDCBP and PDCD6IP. This is Syndecan-4 from Mus musculus (Mouse).